Reading from the N-terminus, the 100-residue chain is Urease subunit gamma (100 aa).

The protein belongs to the urease gamma subunit family. In terms of assembly, heterotrimer of UreA (gamma), UreB (beta) and UreC (alpha) subunits. Three heterotrimers associate to form the active enzyme.

The protein resides in the cytoplasm. It catalyses the reaction urea + 2 H2O + H(+) = hydrogencarbonate + 2 NH4(+). Its pathway is nitrogen metabolism; urea degradation; CO(2) and NH(3) from urea (urease route): step 1/1. The sequence is that of Urease subunit gamma from Delftia acidovorans (strain DSM 14801 / SPH-1).